We begin with the raw amino-acid sequence, 488 residues long: Centrosomal protein cep57l1 (488 aa).

The stretch at 71-226 forms a coiled coil; the sequence is LESEKTHARD…AQVQTSLEVN (156 aa). 2 disordered regions span residues 232-272 and 311-342; these read SASS…PPSK and PRVS…LMSS. The span at 241 to 250 shows a compositional bias: basic residues; it reads RKVKKKKQSK. Basic and acidic residues-rich tracts occupy residues 259-270 and 314-325; these read PSSKEPLSKEPP and SQKDPKTVEHKP. Residues 377-403 adopt a coiled-coil conformation; that stretch reads KNTDMREDLERELDYLVKQMEIKSDQI. A disordered region spans residues 416 to 464; sequence LKKTAKKQPRPPSTTKPAEDEQNIGATDPCTPRNKGNLANGTGTPNSKA. Residues 452–464 show a composition bias toward polar residues; it reads NLANGTGTPNSKA.

This sequence belongs to the translokin family. Interacts with clip1, mis12, ndc80 and zwint. Interacts with gamma-tubulin.

Its subcellular location is the cytoplasm. It localises to the cytoskeleton. The protein resides in the microtubule organizing center. It is found in the centrosome. The protein localises to the chromosome. Its subcellular location is the centromere. It localises to the kinetochore. The protein resides in the spindle. Required for spindle microtubule attachment to both kinetochores and centrosomes. Also functions to tether minus-ends of spindle microtubules to centrosomes. May act by forming ring-like structures around microtubules, or by serving as a cross-linker or scaffold at the attachment site. The polypeptide is Centrosomal protein cep57l1 (cep57l1) (Xenopus laevis (African clawed frog)).